A 335-amino-acid polypeptide reads, in one-letter code: Putative SWIB domain-containing protein R508 (335 aa).

Positions 1-12 are enriched in basic residues; that stretch reads MSKRVTSSKKSK. A disordered region spans residues 1–182; the sequence is MSKRVTSSKK…NKKSPKKLLN (182 aa). Low complexity predominate over residues 24–33; sequence KNLSKTSKSV. The span at 60 to 75 shows a compositional bias: polar residues; sequence NIGGSKSSRTYNSEGS. Over residues 83-109 the composition is skewed to basic and acidic residues; the sequence is SSKDSKVIKKNKQKVESSDSEKHSENK. The segment covering 110–126 has biased composition (basic residues); the sequence is SHKKSSKSSSISRKKPI. The span at 163–173 shows a compositional bias: basic and acidic residues; that stretch reads KGEDNNDEKQN. The stretch at 181–217 forms a coiled coil; it reads LNEKKISSESFDDKLNELREELRENYIRQKKIMNDIK. The SWIB/MDM2 domain maps to 244-326; that stretch reads GFNKPQTVPQ…QTWLKKVYNE (83 aa).

This Acanthamoeba polyphaga mimivirus (APMV) protein is Putative SWIB domain-containing protein R508.